The sequence spans 511 residues: Maturase K (511 aa).

It belongs to the intron maturase 2 family. MatK subfamily.

The protein localises to the plastid. It localises to the chloroplast. Usually encoded in the trnK tRNA gene intron. Probably assists in splicing its own and other chloroplast group II introns. This Hordeum vulgare (Barley) protein is Maturase K.